The following is a 41-amino-acid chain: QQCGRQASGRLCGNRLCCSQWGYCGSTASYCGAGCQSQCRS.

At Gln-1 the chain carries Pyrrolidone carboxylic acid. One can recognise a Chitin-binding type-1 domain in the interval 1 to 41; that stretch reads QQCGRQASGRLCGNRLCCSQWGYCGSTASYCGAGCQSQCRS. 4 disulfide bridges follow: Cys-3-Cys-18, Cys-12-Cys-24, Cys-17-Cys-31, and Cys-35-Cys-39.

Its function is as follows. Chitin-binding protein with a defensive function against numerous chitin containing fungal pathogens. It is also an inhibitor of Gram-positive bacteria such as B.subtilis. In Ipomoea nil (Japanese morning glory), this protein is Antimicrobial protein PN-AMP1.